We begin with the raw amino-acid sequence, 218 residues long: Thiopurine S-methyltransferase (218 aa).

Trp-11, Leu-46, Glu-67, and Arg-122 together coordinate S-adenosyl-L-methionine.

The protein belongs to the class I-like SAM-binding methyltransferase superfamily. TPMT family.

It localises to the cytoplasm. The catalysed reaction is S-adenosyl-L-methionine + a thiopurine = S-adenosyl-L-homocysteine + a thiopurine S-methylether.. This chain is Thiopurine S-methyltransferase, found in Vibrio cholerae serotype O1 (strain ATCC 39315 / El Tor Inaba N16961).